The sequence spans 443 residues: Alpha-amylase (443 aa).

Positions 1-24 (MHNTLFRTALLAAALGSFSHTASA) are cleaved as a signal peptide. Substrate is bound by residues His-114 and Arg-196. The Nucleophile role is filled by Asp-198. 201–202 (KH) serves as a coordination point for substrate. Residue Glu-223 is the Proton donor of the active site. Residues Gly-228 and His-287 each coordinate substrate.

The protein belongs to the glycosyl hydrolase 13 family.

It localises to the secreted. It catalyses the reaction Endohydrolysis of (1-&gt;4)-alpha-D-glucosidic linkages in polysaccharides containing three or more (1-&gt;4)-alpha-linked D-glucose units.. The sequence is that of Alpha-amylase (amyA) from Aeromonas hydrophila.